A 39-amino-acid chain; its full sequence is Omega-theraphotoxin-Asp1g (39 aa).

3 disulfides stabilise this stretch: Cys-4-Cys-25, Cys-8-Cys-31, and Cys-17-Cys-36.

This sequence belongs to the neurotoxin 12 (Hwtx-2) family. 06 (TXP1) subfamily. As to expression, expressed by the venom gland.

The protein localises to the secreted. Its function is as follows. Inhibits voltage-gated calcium channels (Cav) in rat cerebellar granule cells. Has insecticidal activity. The chain is Omega-theraphotoxin-Asp1g from Aphonopelma sp. (American tarantula).